Reading from the N-terminus, the 331-residue chain is Pectate lyase B (331 aa).

The first 25 residues, 1-25 (MKFTGSPLLWPSWLPLPAPPPPLPS), serve as a signal peptide directing secretion. The N-linked (GlcNAc...) asparagine glycan is linked to N99. 3 residues coordinate Ca(2+): D139, D169, and D173. The active site involves R226.

Belongs to the polysaccharide lyase 1 family. It depends on Ca(2+) as a cofactor.

The protein resides in the secreted. The catalysed reaction is Eliminative cleavage of (1-&gt;4)-alpha-D-galacturonan to give oligosaccharides with 4-deoxy-alpha-D-galact-4-enuronosyl groups at their non-reducing ends.. It participates in glycan metabolism; pectin degradation; 2-dehydro-3-deoxy-D-gluconate from pectin: step 2/5. Its function is as follows. Acts as a virulence factor active in plant tissue maceration. The chain is Pectate lyase B (PLB) from Colletotrichum gloeosporioides (Anthracnose fungus).